We begin with the raw amino-acid sequence, 716 residues long: Zinc finger protein 840 (716 aa).

Residues 42–113 (VRFRDVAVVF…EREVTGDPCP (72 aa)) enclose the KRAB domain. C2H2-type zinc fingers lie at residues 151 to 173 (YECD…QKIH), 207 to 229 (FECN…QSMH), 235 to 257 (YKCD…QRFH), 277 to 299 (FSCN…LLIH), 305 to 327 (YTCN…QRTH), 333 to 355 (HKCD…QKTH), 361 to 383 (FSCN…QQIH), 389 to 411 (FICS…KGTH), 417 to 439 (YQCT…QKTH), 445 to 467 (FACN…KKIH), 473 to 495 (YECG…KKIH), 501 to 523 (FVCN…QRTH), 549 to 571 (FPCN…QQIH), 577 to 599 (FICS…KGTH), 605 to 627 (YQCT…QKTH), 633 to 655 (FTCN…KKIH), 661 to 683 (YECG…KKIH), and 689 to 711 (FVCN…QITH). The interval 515–548 (KLSRHQRTHNKKENSSKSVSNLNKHQKTHAGEKP) is disordered.

It belongs to the krueppel C2H2-type zinc-finger protein family.

The protein resides in the nucleus. May be involved in transcriptional regulation. This chain is Zinc finger protein 840 (ZNF840P), found in Homo sapiens (Human).